A 479-amino-acid chain; its full sequence is Anaerobic nitric oxide reductase flavorubredoxin (479 aa).

Residues 30 to 210 are zinc metallo-hydrolase; the sequence is LRGSSYNSYL…PFSRLVTPKI (181 aa). Residues His-79, Glu-81, Asp-83, His-147, Asp-166, and His-227 each coordinate Fe cation. One can recognise a Flavodoxin-like domain in the interval 254-393; the sequence is ITIFYDTMSN…LCRQHGRDIA (140 aa). FMN contacts are provided by residues 260–264 and 342–369; these read TMSNN and AFGS…EMSL. One can recognise a Rubredoxin-like domain in the interval 423-474; sequence GPKMQCSVCQWIYDPALGEPLQDVAPGTPWSDVPDNFLCPECSLGKDVFDVL. Fe cation contacts are provided by Cys-428, Cys-431, Cys-461, and Cys-464.

In the N-terminal section; belongs to the zinc metallo-hydrolase group 3 family. In terms of assembly, homotetramer. The cofactor is Fe cation. FMN serves as cofactor.

Its subcellular location is the cytoplasm. The protein operates within nitrogen metabolism; nitric oxide reduction. In terms of biological role, anaerobic nitric oxide reductase; uses NADH to detoxify nitric oxide (NO), protecting several 4Fe-4S NO-sensitive enzymes. Has at least 2 reductase partners, only one of which (NorW, flavorubredoxin reductase) has been identified. NO probably binds to the di-iron center; electrons enter from the NorW at rubredoxin and are transferred sequentially to the FMN center and the di-iron center. Also able to function as an aerobic oxygen reductase. The polypeptide is Anaerobic nitric oxide reductase flavorubredoxin (Salmonella typhi).